The chain runs to 305 residues: Acetylglutamate kinase (305 aa).

Residues 67–68 (GG), Arg89, and Asn190 each bind substrate.

The protein belongs to the acetylglutamate kinase family. ArgB subfamily.

The protein localises to the cytoplasm. It catalyses the reaction N-acetyl-L-glutamate + ATP = N-acetyl-L-glutamyl 5-phosphate + ADP. It participates in amino-acid biosynthesis; L-arginine biosynthesis; N(2)-acetyl-L-ornithine from L-glutamate: step 2/4. Catalyzes the ATP-dependent phosphorylation of N-acetyl-L-glutamate. The protein is Acetylglutamate kinase of Bifidobacterium longum (strain NCC 2705).